Reading from the N-terminus, the 597-residue chain is Aspartate--tRNA ligase (597 aa).

Glutamate 171 provides a ligand contact to L-aspartate. An aspartate region spans residues glutamine 195–lysine 198. Arginine 217 contributes to the L-aspartate binding site. ATP is bound by residues arginine 217–glutamate 219 and glutamine 226. Histidine 448 contributes to the L-aspartate binding site. An ATP-binding site is contributed by glutamate 482. An L-aspartate-binding site is contributed by arginine 489. Glycine 534–arginine 537 lines the ATP pocket.

The protein belongs to the class-II aminoacyl-tRNA synthetase family. Type 1 subfamily. As to quaternary structure, homodimer.

Its subcellular location is the cytoplasm. It carries out the reaction tRNA(Asp) + L-aspartate + ATP = L-aspartyl-tRNA(Asp) + AMP + diphosphate. Its function is as follows. Catalyzes the attachment of L-aspartate to tRNA(Asp) in a two-step reaction: L-aspartate is first activated by ATP to form Asp-AMP and then transferred to the acceptor end of tRNA(Asp). This is Aspartate--tRNA ligase from Photobacterium profundum (strain SS9).